Reading from the N-terminus, the 198-residue chain is Outer-membrane lipoprotein carrier protein (198 aa).

Positions 1 to 17 (MKKILLSLCFLSSVAFA) are cleaved as a signal peptide.

The protein belongs to the LolA family. As to quaternary structure, monomer.

Its subcellular location is the periplasm. Functionally, participates in the translocation of lipoproteins from the inner membrane to the outer membrane. Only forms a complex with a lipoprotein if the residue after the N-terminal Cys is not an aspartate (The Asp acts as a targeting signal to indicate that the lipoprotein should stay in the inner membrane). The protein is Outer-membrane lipoprotein carrier protein of Aliivibrio salmonicida (strain LFI1238) (Vibrio salmonicida (strain LFI1238)).